The following is a 552-amino-acid chain: MISKINGKLFADMIIQGAQNLSNNADLVDSLNVYPVPDGDTGTNMNLTITSGREEVENNLSQNIGELGKTFSKGLLMGARGNSGVILSQLFRGFCKNIEGEKEISVQQFAESFQAGVETAYKAVMKPVEGTILTVAKDAAKAAMDYVDQAEDCVDLMVHVIEAASESLDNTPNLLAVLKEVGVVDSGGKGLLCVYEGFLKGLKGEKVEAQAPKLDTESFVNDDHDFHGVINTEDIVYGYCTEMMVRFGKNKKAFDEQEFRNDMSEFGDSLLVINDDEIVKVHVHTEHPGDVFNYGQKYGELIKLKVENMREQHREVIRKEQDGIQNKATNESKTVETAIVTISVGDGIAELFKSMGATHIISGGQTMNPSTEDIVKVIEQSKCKRAIILPNNKNIMMASEQAASIVEAETVVIPTKSIPQGISALFQYDQESNLEDNKSHMNDALETVQSGSITFAVRDTKIDGIEIKKDEFMGLAEDKIVISDFNQFHAVKGLLSKLLNEDSEILTMISGEDADNSITNQIIDWIESEYPDVEVEQHEGGQPIYQYFFAVE.

A DhaL domain is found at 8–200 (KLFADMIIQG…LLCVYEGFLK (193 aa)).

This is an uncharacterized protein from Staphylococcus epidermidis (strain ATCC 35984 / DSM 28319 / BCRC 17069 / CCUG 31568 / BM 3577 / RP62A).